A 120-amino-acid chain; its full sequence is Large ribosomal subunit protein eL18 (120 aa).

This sequence belongs to the eukaryotic ribosomal protein eL18 family.

This chain is Large ribosomal subunit protein eL18, found in Pyrococcus horikoshii (strain ATCC 700860 / DSM 12428 / JCM 9974 / NBRC 100139 / OT-3).